Here is a 223-residue protein sequence, read N- to C-terminus: RNA-free ribonuclease P (223 aa).

Belongs to the HARP family.

The catalysed reaction is Endonucleolytic cleavage of RNA, removing 5'-extranucleotides from tRNA precursor.. Its function is as follows. RNA-free RNase P that catalyzes the removal of the 5'-leader sequence from pre-tRNA to produce the mature 5'-terminus. In Methanococcus maripaludis (strain C7 / ATCC BAA-1331), this protein is RNA-free ribonuclease P.